A 250-amino-acid chain; its full sequence is MAVTKLVLLRHGESEWNRENRFTGWTDVELSEKGRQEALAAGRLLKAQGFSFDIAYTSVLKRAIHTLWHVLDKLDQPWLPVEKSWKLNERHYGALQGLNKAETAQQYGDEQVKLWRRAFAITPPALTPDDPRYPGHDPRYAALSADELPLTESLATTIERVIPYWQQQIAPRISAGERIIIAAHGNSLRALVKHLDHLSEGEIVELNIPTGVPLVYEFDKNMRPLHHYYLGDATEIAARQSAVANQGKAG.

Substrate is bound by residues 10–17, 23–24, R62, 89–92, K100, 116–117, and 185–186; these read RHGESEWN, TG, ERHY, RR, and GN. The Tele-phosphohistidine intermediate role is filled by H11. E89 serves as the catalytic Proton donor/acceptor.

It belongs to the phosphoglycerate mutase family. BPG-dependent PGAM subfamily. As to quaternary structure, homodimer.

It catalyses the reaction (2R)-2-phosphoglycerate = (2R)-3-phosphoglycerate. It participates in carbohydrate degradation; glycolysis; pyruvate from D-glyceraldehyde 3-phosphate: step 3/5. In terms of biological role, catalyzes the interconversion of 2-phosphoglycerate and 3-phosphoglycerate. The polypeptide is 2,3-bisphosphoglycerate-dependent phosphoglycerate mutase (Edwardsiella ictaluri (strain 93-146)).